A 526-amino-acid polypeptide reads, in one-letter code: Probable lipid II flippase MurJ (526 aa).

A run of 14 helical transmembrane segments spans residues 35-55 (LMGTSATADAFTVAFMIPNLF), 58-78 (LFAENAISVAFIPVFTQHYSM), 96-116 (AIFTLMSSVTASISLIGILGA), 137-157 (MFPYLWMISLAAFFQGMLHSI), 160-180 (FVPSGCTPIFFNVSVIFSMYF), 190-210 (IAAAIGVLIGGCAQALFQLIF), 235-255 (IIALLLPTTVGIATYLLNDLV), 281-301 (LLGIFIVSLSSVVLPDLSFHV), 313-333 (LITAIKIVMLITIPATFFVLF), 362-382 (WHSVGMLAIALNRVLISAFYA), 391-411 (IAGTISFVTNIILATLLFIPL), 415-435 (GIAFSLSAASMVQTVFLWMFL), 459-479 (LFSVIALVPTWASSFFTAYFF), and 489-509 (GVPLCVEALIFSCTGCILLLL).

It belongs to the MurJ/MviN family.

The protein resides in the cell inner membrane. It functions in the pathway cell wall biogenesis; peptidoglycan biosynthesis. Functionally, involved in peptidoglycan biosynthesis. Transports lipid-linked peptidoglycan precursors from the inner to the outer leaflet of the cytoplasmic membrane. This chain is Probable lipid II flippase MurJ, found in Treponema pallidum (strain Nichols).